Here is a 201-residue protein sequence, read N- to C-terminus: UPF0301 protein MAP_0045 (201 aa).

Belongs to the UPF0301 (AlgH) family.

This chain is UPF0301 protein MAP_0045, found in Mycolicibacterium paratuberculosis (strain ATCC BAA-968 / K-10) (Mycobacterium paratuberculosis).